Here is a 343-residue protein sequence, read N- to C-terminus: Sodium/bile acid cotransporter 7-A (343 aa).

Over 1–10 the chain is Cytoplasmic; that stretch reads MGLLERLRKE. The helical transmembrane segment at 11–31 threads the bilayer; sequence WFIVGIILVIAAAKLEPTVGV. The Extracellular portion of the chain corresponds to 32 to 37; that stretch reads KGGPLK. Residues 38–58 form a helical membrane-spanning segment; sequence PEITITYIAVSAIFFNSGLSL. Residues 59-71 lie on the Cytoplasmic side of the membrane; sequence KTEELTNALMHVK. Residues 72–92 traverse the membrane as a helical segment; sequence LHLFVQLFTLVFFPTAIWLFL. The Extracellular segment spans residues 93–116; that stretch reads QVLSLTPINEWLLKGLQTVSCMPP. A helical transmembrane segment spans residues 117 to 137; that stretch reads PVSSAVILTKAVGGNEAAAIF. Position 138 (Asn-138) is a topological domain, cytoplasmic. A helical transmembrane segment spans residues 139–159; that stretch reads SAFGSFLGIVVTPLLLLLFLG. Residues 160 to 163 are Extracellular-facing; sequence SSSS. A helical membrane pass occupies residues 164 to 184; the sequence is VPFTSIFSQLFMTVVVPLIIG. Residues 185–201 lie on the Cytoplasmic side of the membrane; it reads QIVRRYIKDWLERKKPP. A helical membrane pass occupies residues 202-222; sequence FGAISSCVLLMIIYTTFCDTF. Residues 223 to 234 are Extracellular-facing; sequence SNPNIDLDTFSL. A helical membrane pass occupies residues 235-255; the sequence is VVIVFIIFFIQLAFMLLTFLF. Topologically, residues 256-270 are cytoplasmic; the sequence is STSKNSGFTPADTVA. The helical transmembrane segment at 271-291 threads the bilayer; that stretch reads IVFCSTHKSLTLGIPMLKIVF. Residues 292–298 are Extracellular-facing; that stretch reads VGYEHLS. Residues 299–319 traverse the membrane as a helical segment; that stretch reads LISVPLLIYHPAQILLGSVLV. At 320-343 the chain is on the cytoplasmic side; the sequence is PTIKSWMLSRQKALKLTRQPKIPL.

Belongs to the bile acid:sodium symporter (BASS) (TC 2.A.28) family. Strongly expressed in small intestine. Moderately expressed in spleen. Weakly expressed in skeletal muscle. Not detected in other tissues tested.

The protein localises to the cell membrane. It is found in the endoplasmic reticulum membrane. Its subcellular location is the golgi apparatus membrane. Its function is as follows. Involved in teeth and skeletal development. Has an essential role in the biosynthesis and trafficking of glycosaminoglycans and glycoproteins to produce a proper functioning extracellular matrix. Required for extracellular matrix mineralization. Also involved in the regulation of cellular calcium homeostasis. Does not show transport activity towards bile acids or steroid sulfates. The sequence is that of Sodium/bile acid cotransporter 7-A (slc10a7-a) from Xenopus laevis (African clawed frog).